Here is a 224-residue protein sequence, read N- to C-terminus: 7-cyano-7-deazaguanine synthase (224 aa).

Phe-14–Leu-24 is an ATP binding site. 4 residues coordinate Zn(2+): Cys-190, Cys-198, Cys-201, and Cys-204.

Belongs to the QueC family. It depends on Zn(2+) as a cofactor.

It catalyses the reaction 7-carboxy-7-deazaguanine + NH4(+) + ATP = 7-cyano-7-deazaguanine + ADP + phosphate + H2O + H(+). It participates in purine metabolism; 7-cyano-7-deazaguanine biosynthesis. In terms of biological role, catalyzes the ATP-dependent conversion of 7-carboxy-7-deazaguanine (CDG) to 7-cyano-7-deazaguanine (preQ(0)). This chain is 7-cyano-7-deazaguanine synthase, found in Haemophilus ducreyi (strain 35000HP / ATCC 700724).